The primary structure comprises 472 residues: Flotillin-like protein 6 (472 aa).

Cys37 is lipidated: S-palmitoyl cysteine. The stretch at 237-327 (ENQREAEVAQ…ELYKKQKEAE (91 aa)) forms a coiled coil.

The protein belongs to the band 7/mec-2 family. Flotillin subfamily. Post-translationally, may be palmitoylated. In terms of tissue distribution, very low occasional expression in roots and nodules.

Its subcellular location is the cell membrane. The protein resides in the membrane. The protein localises to the caveola. In terms of biological role, may act as a scaffolding protein within caveolar membranes, functionally participating in formation of caveolae or caveolae-like vesicles. May be involved in nodule formation. The sequence is that of Flotillin-like protein 6 (FLOT6) from Medicago truncatula (Barrel medic).